Reading from the N-terminus, the 182-residue chain is ATP synthase subunit delta, mitochondrial (182 aa).

A mitochondrion-targeting transit peptide spans 1–17; sequence MFRTFGRRLVSCTLPLL.

The protein belongs to the ATPase epsilon chain family. In terms of assembly, F-type ATPases have 2 components, F(1) - the catalytic core - and F(o) - the membrane proton channel. F(1) has five subunits: alpha(3), beta(3), gamma(1), delta(1), epsilon(1), plus the additional subunit P18 (Tb427.05.1710) that is not present in F(1)F(o) ATP synthase from metazoa. Subunit P18 (Tb927.5.1710) interacts with the alpha subunit with a 1:1 stoichiometry; the interaction is direct. Subunit gamma is part of the central stalk. F(o) has three main subunits: a, b and c. The trypanosomal ATPase complex contains additional subunits that are not present in the F(1)F(o) ATP synthase from metazoa.

Its subcellular location is the mitochondrion. The protein resides in the mitochondrion inner membrane. Functionally, mitochondrial membrane ATP synthase (F(1)F(o) ATP synthase) produces ATP from ADP in the presence of a proton gradient across the membrane which is generated by electron transport complexes of the respiratory chain. F-type ATPases consist of two structural domains, F(1) - containing the extramembraneous catalytic core, and F(o) - containing the membrane proton channel, linked together by a central stalk and a peripheral stalk. During catalysis, ATP synthesis in the catalytic domain of F(1) is coupled via a rotary mechanism of the central stalk subunits to proton translocation. Subunits alpha and beta form the catalytic core in F(1). Rotation of the central stalk against the surrounding alpha(3)beta(3) subunits leads to hydrolysis of ATP in three separate catalytic sites on the beta subunits. Contrary to the procyclic, insect form that requires F(1)F(o) ATP synthase for ATP synthesis, the bloodstream form relies on ATP hydrolysis by F(1)F(o) ATP synthase to maintain its mitochondrial membrane potential. In Trypanosoma brucei brucei, this protein is ATP synthase subunit delta, mitochondrial.